Reading from the N-terminus, the 292-residue chain is 4-hydroxy-tetrahydrodipicolinate synthase (292 aa).

Thr-45 lines the pyruvate pocket. Tyr-133 serves as the catalytic Proton donor/acceptor. Catalysis depends on Lys-161, which acts as the Schiff-base intermediate with substrate. Residue Ile-203 participates in pyruvate binding.

The protein belongs to the DapA family. As to quaternary structure, homotetramer; dimer of dimers.

It is found in the cytoplasm. The catalysed reaction is L-aspartate 4-semialdehyde + pyruvate = (2S,4S)-4-hydroxy-2,3,4,5-tetrahydrodipicolinate + H2O + H(+). It participates in amino-acid biosynthesis; L-lysine biosynthesis via DAP pathway; (S)-tetrahydrodipicolinate from L-aspartate: step 3/4. Functionally, catalyzes the condensation of (S)-aspartate-beta-semialdehyde [(S)-ASA] and pyruvate to 4-hydroxy-tetrahydrodipicolinate (HTPA). This chain is 4-hydroxy-tetrahydrodipicolinate synthase, found in Salmonella typhi.